A 631-amino-acid polypeptide reads, in one-letter code: tRNA uridine 5-carboxymethylaminomethyl modification enzyme MnmG (631 aa).

Residues 13 to 18 (GGGHAG), V125, and S180 each bind FAD. Residue 273–287 (GPRYCPSIEDKVMRF) participates in NAD(+) binding. FAD is bound at residue Q370.

This sequence belongs to the MnmG family. Homodimer. Heterotetramer of two MnmE and two MnmG subunits. Requires FAD as cofactor.

It localises to the cytoplasm. In terms of biological role, NAD-binding protein involved in the addition of a carboxymethylaminomethyl (cmnm) group at the wobble position (U34) of certain tRNAs, forming tRNA-cmnm(5)s(2)U34. In Vibrio atlanticus (strain LGP32) (Vibrio splendidus (strain Mel32)), this protein is tRNA uridine 5-carboxymethylaminomethyl modification enzyme MnmG.